A 705-amino-acid chain; its full sequence is Prolyl endopeptidase (705 aa).

The first 20 residues, M1–A20, serve as a signal peptide directing secretion. Catalysis depends on charge relay system residues S556 and H675.

The protein belongs to the peptidase S9A family. As to quaternary structure, monomer.

The protein localises to the periplasm. It catalyses the reaction Hydrolysis of Pro-|-Xaa &gt;&gt; Ala-|-Xaa in oligopeptides.. In terms of biological role, cleaves peptide bonds on the C-terminal side of prolyl residues within peptides that are up to approximately 30 amino acids long. Has an absolute requirement for an X-Pro bond in the trans configuration immediately preceding the Pro-Y scissible bond. The sequence is that of Prolyl endopeptidase (f1pep1) from Elizabethkingia meningoseptica (Chryseobacterium meningosepticum).